The sequence spans 917 residues: Transcriptional regulatory protein SEF1 (917 aa).

The interval 1–88 (MKFEKGKVRI…SKPTGHRPVT (88 aa)) is disordered. Residues 13 to 27 (KPSPTPTNPQTPLPL) are compositionally biased toward pro residues. Low complexity predominate over residues 56 to 70 (SNSTASTPNSATPTS). Residues 71 to 81 (VGTPPQKTSKP) are compositionally biased toward polar residues. A DNA-binding region (zn(2)-C6 fungal-type) is located at residues 90-120 (CTFCRQHKIKCNASDNYPNPCERCKKMGLKC). The stretch at 129-164 (RKGSQIQSLKSDVDELKAKIEMLTKNESLLTQALNQ) forms a coiled coil. Disordered stretches follow at residues 168–212 (NHAS…ASPI) and 778–849 (QQYP…PFIL). The span at 171–184 (SQQQQSSGSQSQQQ) shows a compositional bias: low complexity. Residues 191–212 (RALSYTSANSSPQVAFSNASPI) show a composition bias toward polar residues. The segment covering 778–827 (QQYPMQQDQQQQEPSQQQQQKHSQQSQQYQQQQQSNQQQPHLQHQRQFQQ) has biased composition (low complexity).

Interacts with SSN3 and SFU1. Post-translationally, phosphorylated by SSN3 under iron-depleted conditions which leads to nuclear localization.

The protein localises to the cytoplasm. It localises to the nucleus. Its function is as follows. Transcription factor which plays an essential role in virulence by activating the transcription of iron uptake genes such as FRE7 in iron-poor environments such as the host bloodstream and internal organs. Promotes commensalism in a mouse model of gastrointestinal infection. The polypeptide is Transcriptional regulatory protein SEF1 (SEF1) (Candida albicans (strain SC5314 / ATCC MYA-2876) (Yeast)).